Here is a 458-residue protein sequence, read N- to C-terminus: uncharacterized protein (458 aa).

The next 12 helical transmembrane spans lie at 26–46 (LIAI…KSIH), 47–67 (FAGP…FLIM), 95–115 (AAFI…MADL), 125–145 (WLPG…LLIM), 160–180 (FALI…VMIF), 208–228 (GFIL…LVGL), 251–271 (VLLF…WDII), 278–298 (FVQV…NFVV), 342–362 (ALFF…IMPE), 365–385 (FTLI…ITVI), 409–429 (PFTN…LALA), and 432–452 (TRVS…IYKV).

The protein belongs to the amino acid-polyamine-organocation (APC) superfamily.

The protein localises to the cell membrane. In terms of biological role, probable amino-acid or metabolite transport protein. This is an uncharacterized protein from Bacillus subtilis (strain 168).